We begin with the raw amino-acid sequence, 105 residues long: Fe-S protein maturation auxiliary factor PG_1777 (105 aa).

This sequence belongs to the Fe-S cluster assembly domain superfamily. MIP18-like family. As to quaternary structure, putative homodimer; may be disulfide-linked.

Its function is as follows. Iron binding protein that protects DNA from Fenton chemistry-mediated damage caused by hydrogen peroxide induced oxidative stress. May be involved in iron-sulfur cluster assembly. This Porphyromonas gingivalis (strain ATCC BAA-308 / W83) protein is Fe-S protein maturation auxiliary factor PG_1777.